A 912-amino-acid polypeptide reads, in one-letter code: Protein translocase subunit SecA (912 aa).

ATP contacts are provided by residues glutamine 87, 105–109, and aspartate 508; that span reads GEGKT. The interval 869 to 912 is disordered; sequence EQMQGGNAPVPVSQVTRDEPKVGRNDPCPCGSGKKYKHCHGQLS. Cysteine 896, cysteine 898, cysteine 907, and histidine 908 together coordinate Zn(2+). The span at 902–912 shows a compositional bias: basic residues; that stretch reads KKYKHCHGQLS.

This sequence belongs to the SecA family. Monomer and homodimer. Part of the essential Sec protein translocation apparatus which comprises SecA, SecYEG and auxiliary proteins SecDF-YajC and YidC. Zn(2+) is required as a cofactor.

It localises to the cell inner membrane. It is found in the cytoplasm. The catalysed reaction is ATP + H2O + cellular proteinSide 1 = ADP + phosphate + cellular proteinSide 2.. Its function is as follows. Part of the Sec protein translocase complex. Interacts with the SecYEG preprotein conducting channel. Has a central role in coupling the hydrolysis of ATP to the transfer of proteins into and across the cell membrane, serving both as a receptor for the preprotein-SecB complex and as an ATP-driven molecular motor driving the stepwise translocation of polypeptide chains across the membrane. This chain is Protein translocase subunit SecA, found in Xanthomonas axonopodis pv. citri (strain 306).